We begin with the raw amino-acid sequence, 162 residues long: 2-C-methyl-D-erythritol 2,4-cyclodiphosphate synthase (162 aa).

A divalent metal cation is bound by residues aspartate 12 and histidine 14. Residues 12–14 (DVH) and 38–39 (HS) each bind 4-CDP-2-C-methyl-D-erythritol 2-phosphate. A divalent metal cation is bound at residue histidine 46. 4-CDP-2-C-methyl-D-erythritol 2-phosphate is bound by residues 60 to 62 (DIG), 136 to 139 (TTTE), phenylalanine 143, and arginine 146.

This sequence belongs to the IspF family. As to quaternary structure, homotrimer. The cofactor is a divalent metal cation.

It carries out the reaction 4-CDP-2-C-methyl-D-erythritol 2-phosphate = 2-C-methyl-D-erythritol 2,4-cyclic diphosphate + CMP. The protein operates within isoprenoid biosynthesis; isopentenyl diphosphate biosynthesis via DXP pathway; isopentenyl diphosphate from 1-deoxy-D-xylulose 5-phosphate: step 4/6. Involved in the biosynthesis of isopentenyl diphosphate (IPP) and dimethylallyl diphosphate (DMAPP), two major building blocks of isoprenoid compounds. Catalyzes the conversion of 4-diphosphocytidyl-2-C-methyl-D-erythritol 2-phosphate (CDP-ME2P) to 2-C-methyl-D-erythritol 2,4-cyclodiphosphate (ME-CPP) with a corresponding release of cytidine 5-monophosphate (CMP). The polypeptide is 2-C-methyl-D-erythritol 2,4-cyclodiphosphate synthase (Porphyromonas gingivalis (strain ATCC BAA-308 / W83)).